The chain runs to 409 residues: Peptidase T (409 aa).

Histidine 78 lines the Zn(2+) pocket. Aspartate 80 is an active-site residue. Position 139 (aspartate 139) interacts with Zn(2+). Residue glutamate 173 is the Proton acceptor of the active site. Zn(2+)-binding residues include glutamate 174, aspartate 196, and histidine 378.

It belongs to the peptidase M20B family. Zn(2+) serves as cofactor.

The protein localises to the cytoplasm. It catalyses the reaction Release of the N-terminal residue from a tripeptide.. Its function is as follows. Cleaves the N-terminal amino acid of tripeptides. The polypeptide is Peptidase T (Shewanella sediminis (strain HAW-EB3)).